Reading from the N-terminus, the 184-residue chain is Probable chemoreceptor glutamine deamidase CheD (184 aa).

The protein belongs to the CheD family.

The catalysed reaction is L-glutaminyl-[protein] + H2O = L-glutamyl-[protein] + NH4(+). Probably deamidates glutamine residues to glutamate on methyl-accepting chemotaxis receptors (MCPs), playing an important role in chemotaxis. The chain is Probable chemoreceptor glutamine deamidase CheD from Rhizobium etli (strain CIAT 652).